The following is a 666-amino-acid chain: MSDSHLTAFDKASKAGFIIALGIVYGDIGTSPLYTMQSLVENQGGVNQVSESFILGSISLIIWTLTLITTIKYVLIALKADNHHEGGIFSLFTLVRKMSPWLIIPAMIGGATLLSDGALTPAVTVTSAIEGLKAVPGLSHIYQNQTNIIITTLVILIVLFGIQRFGTGFIGKIFGPVMFIWFSFLGVSGFFNTLGHLEIFKAINPYYALHLLFSPENHRGIFILGSIFLATTGAEALYSDLGHVGRGNIYVSWPFVKMCIVWSYCGQAAWILANKHSGIELNPFFASVPSQLRVYLVSLATLAAIIASQALISGSFTLVSEAMRLKIFPLFRVTYPGANLGQLYIPVINWILFAVTSCTVLAFRTSAHMEAAYGLAITITMLMTTILLKYYLIKKGTRPILAHLAMAFFALVEFIFFLASAIKFMHGGYAVVILALAIVFVMFIWHAGTRIVFKYVKSLNLNDYKEQIKQLRDDVCFDLYQTNVVYLSNRMQDHMIDRSILYSILDKRPKRAQVYWFVNVQVTDEPYTAKYKVDMMGTDYMVRVNLYLGFRMPQTVPRYLRTIVQDLMESGRLPKQEQEYTITPGRDVGDFRFVLIEERVSNARQLSNFERFIMQTKASIKHVTASPMRWFGLQYSEVTLEVVPLILSDVLKLPIKELVPVEDSEA.

12 helical membrane passes run 16 to 36 (GFII…LYTM), 58 to 78 (ISLI…LIAL), 100 to 120 (PWLI…GALT), 141 to 161 (IYQN…VLFG), 165 to 185 (FGTG…FSFL), 221 to 241 (IFIL…YSDL), 253 to 273 (WPFV…WILA), 294 to 314 (VYLV…LISG), 343 to 363 (LYIP…VLAF), 373 to 393 (YGLA…YYLI), 399 to 419 (PILA…FFLA), and 424 to 444 (FMHG…VMFI).

The protein belongs to the HAK/KUP transporter (TC 2.A.72) family.

It is found in the cell membrane. It catalyses the reaction K(+)(in) + H(+)(in) = K(+)(out) + H(+)(out). Functionally, transport of potassium into the cell. Likely operates as a K(+):H(+) symporter. The protein is Probable potassium transport system protein Kup of Streptococcus pyogenes serotype M4 (strain MGAS10750).